The sequence spans 298 residues: Lipoyl synthase (298 aa).

Residues Cys37, Cys42, Cys48, Cys63, Cys67, Cys70, and Ser277 each coordinate [4Fe-4S] cluster. The Radical SAM core domain occupies 49 to 266 (WGGGTATVML…KTLAESYGFL (218 aa)).

Belongs to the radical SAM superfamily. Lipoyl synthase family. Requires [4Fe-4S] cluster as cofactor.

The protein localises to the cytoplasm. The enzyme catalyses [[Fe-S] cluster scaffold protein carrying a second [4Fe-4S](2+) cluster] + N(6)-octanoyl-L-lysyl-[protein] + 2 oxidized [2Fe-2S]-[ferredoxin] + 2 S-adenosyl-L-methionine + 4 H(+) = [[Fe-S] cluster scaffold protein] + N(6)-[(R)-dihydrolipoyl]-L-lysyl-[protein] + 4 Fe(3+) + 2 hydrogen sulfide + 2 5'-deoxyadenosine + 2 L-methionine + 2 reduced [2Fe-2S]-[ferredoxin]. The protein operates within protein modification; protein lipoylation via endogenous pathway; protein N(6)-(lipoyl)lysine from octanoyl-[acyl-carrier-protein]: step 2/2. Catalyzes the radical-mediated insertion of two sulfur atoms into the C-6 and C-8 positions of the octanoyl moiety bound to the lipoyl domains of lipoate-dependent enzymes, thereby converting the octanoylated domains into lipoylated derivatives. The protein is Lipoyl synthase of Myxococcus xanthus (strain DK1622).